A 476-amino-acid chain; its full sequence is Serine/threonine-protein kinase PknF (476 aa).

2 positions are modified to phosphothreonine; by autocatalysis: T8 and T13. The region spanning F12–G279 is the Protein kinase domain. Residues L18–V26 and K41 each bind ATP. D137 functions as the Proton acceptor in the catalytic mechanism. Residues T173, T175, and T287 each carry the phosphothreonine; by autocatalysis modification. Phosphoserine; by autocatalysis is present on S290. A disordered region spans residues A332 to T376. Residues A338–T376 are compositionally biased toward low complexity.

Belongs to the protein kinase superfamily. Ser/Thr protein kinase family. Post-translationally, dephosphorylated by PstP.

The enzyme catalyses L-seryl-[protein] + ATP = O-phospho-L-seryl-[protein] + ADP + H(+). It catalyses the reaction L-threonyl-[protein] + ATP = O-phospho-L-threonyl-[protein] + ADP + H(+). This chain is Serine/threonine-protein kinase PknF (pknF), found in Mycobacterium bovis (strain ATCC BAA-935 / AF2122/97).